The following is a 1222-amino-acid chain: ATP-dependent helicase/nuclease subunit A (1222 aa).

Positions 39-495 constitute a UvrD-like helicase ATP-binding domain; the sequence is QKRTAQQIEA…ILLKENFRSQ (457 aa). ATP is bound at residue 60–67; that stretch reads ASAGSGKT. A UvrD-like helicase C-terminal domain is found at 524 to 810; that stretch reads QLIAGSHAQT…NLMTIHKSKG (287 aa).

It belongs to the helicase family. AddA subfamily. In terms of assembly, heterodimer of AddA and AddB/RexB. It depends on Mg(2+) as a cofactor.

The catalysed reaction is Couples ATP hydrolysis with the unwinding of duplex DNA by translocating in the 3'-5' direction.. It carries out the reaction ATP + H2O = ADP + phosphate + H(+). The heterodimer acts as both an ATP-dependent DNA helicase and an ATP-dependent, dual-direction single-stranded exonuclease. Recognizes the chi site generating a DNA molecule suitable for the initiation of homologous recombination. The AddA nuclease domain is required for chi fragment generation; this subunit has the helicase and 3' -&gt; 5' nuclease activities. The chain is ATP-dependent helicase/nuclease subunit A from Streptococcus pyogenes serotype M49 (strain NZ131).